A 224-amino-acid polypeptide reads, in one-letter code: MTNIAQEILQTYLVAGTQDTGRENFLPILDQALQAGITCFQFRDKGPNSLPTDAMRSDYAKKAQALCRTYHVPFIIDDRLELALDLQADGLHVGQSDQPWPKIEVAKQHGLITGLSCHTAQEILSSHQQPALDYIGVGPIFPTNSKEDAKTPLGLAQLKAFTQLSQLPVVAIGGISLKNCQQVAETGVAGAAVISAITQAKNIPQAIQLLNQPWQSSEGNNHES.

Residues glutamine 41–lysine 45 and aspartate 77 contribute to the 4-amino-2-methyl-5-(diphosphooxymethyl)pyrimidine site. Residues aspartate 78 and aspartate 97 each coordinate Mg(2+). Serine 116 lines the 4-amino-2-methyl-5-(diphosphooxymethyl)pyrimidine pocket. Threonine 143–serine 145 contributes to the 2-[(2R,5Z)-2-carboxy-4-methylthiazol-5(2H)-ylidene]ethyl phosphate binding site. A 4-amino-2-methyl-5-(diphosphooxymethyl)pyrimidine-binding site is contributed by lysine 146. Residues glycine 174 and isoleucine 194–serine 195 contribute to the 2-[(2R,5Z)-2-carboxy-4-methylthiazol-5(2H)-ylidene]ethyl phosphate site.

Belongs to the thiamine-phosphate synthase family. The cofactor is Mg(2+).

The enzyme catalyses 2-[(2R,5Z)-2-carboxy-4-methylthiazol-5(2H)-ylidene]ethyl phosphate + 4-amino-2-methyl-5-(diphosphooxymethyl)pyrimidine + 2 H(+) = thiamine phosphate + CO2 + diphosphate. The catalysed reaction is 2-(2-carboxy-4-methylthiazol-5-yl)ethyl phosphate + 4-amino-2-methyl-5-(diphosphooxymethyl)pyrimidine + 2 H(+) = thiamine phosphate + CO2 + diphosphate. It catalyses the reaction 4-methyl-5-(2-phosphooxyethyl)-thiazole + 4-amino-2-methyl-5-(diphosphooxymethyl)pyrimidine + H(+) = thiamine phosphate + diphosphate. The protein operates within cofactor biosynthesis; thiamine diphosphate biosynthesis; thiamine phosphate from 4-amino-2-methyl-5-diphosphomethylpyrimidine and 4-methyl-5-(2-phosphoethyl)-thiazole: step 1/1. Condenses 4-methyl-5-(beta-hydroxyethyl)thiazole monophosphate (THZ-P) and 2-methyl-4-amino-5-hydroxymethyl pyrimidine pyrophosphate (HMP-PP) to form thiamine monophosphate (TMP). This Latilactobacillus sakei subsp. sakei (strain 23K) (Lactobacillus sakei subsp. sakei) protein is Thiamine-phosphate synthase.